An 81-amino-acid polypeptide reads, in one-letter code: Cytotoxin 4a (81 aa).

The signal sequence occupies residues 1–21; that stretch reads MKTLLLTLVVVTIVCLDLGYT. 4 cysteine pairs are disulfide-bonded: Cys24–Cys42, Cys35–Cys59, Cys63–Cys74, and Cys75–Cys80.

It belongs to the three-finger toxin family. Short-chain subfamily. Type IA cytotoxin sub-subfamily. As to quaternary structure, monomer in solution; Homodimer and oligomer in the presence of negatively charged lipids forming a pore with a size ranging between 20 and 30 Angstroms. In terms of tissue distribution, expressed by the venom gland.

It localises to the secreted. Its subcellular location is the target cell membrane. Its function is as follows. Shows cytolytic activity on many different cells by forming pore in lipid membranes. In vivo, increases heart rate or kills the animal by cardiac arrest. In addition, it binds to heparin with high affinity, interacts with Kv channel-interacting protein 1 (KCNIP1) in a calcium-independent manner, and binds to integrin alpha-V/beta-3 (ITGAV/ITGB3) with moderate affinity. In Naja sputatrix (Malayan spitting cobra), this protein is Cytotoxin 4a.